Reading from the N-terminus, the 431-residue chain is Phosphoribosylamine--glycine ligase (431 aa).

One can recognise an ATP-grasp domain in the interval 108–315 (KDFLARHEIP…LVLLVEAAFA (208 aa)). 134–195 (LQEKGAPIVI…EEFLDGEEAS (62 aa)) provides a ligand contact to ATP. The Mg(2+) site is built by E285 and N287.

It belongs to the GARS family. Requires Mg(2+) as cofactor. Mn(2+) serves as cofactor.

The enzyme catalyses 5-phospho-beta-D-ribosylamine + glycine + ATP = N(1)-(5-phospho-beta-D-ribosyl)glycinamide + ADP + phosphate + H(+). It functions in the pathway purine metabolism; IMP biosynthesis via de novo pathway; N(1)-(5-phospho-D-ribosyl)glycinamide from 5-phospho-alpha-D-ribose 1-diphosphate: step 2/2. The polypeptide is Phosphoribosylamine--glycine ligase (Pseudomonas putida (strain ATCC 47054 / DSM 6125 / CFBP 8728 / NCIMB 11950 / KT2440)).